The primary structure comprises 158 residues: 3-hydroxyacyl-[acyl-carrier-protein] dehydratase FabZ (158 aa).

Histidine 61 is a catalytic residue.

This sequence belongs to the thioester dehydratase family. FabZ subfamily.

It localises to the cytoplasm. It carries out the reaction a (3R)-hydroxyacyl-[ACP] = a (2E)-enoyl-[ACP] + H2O. In terms of biological role, involved in unsaturated fatty acids biosynthesis. Catalyzes the dehydration of short chain beta-hydroxyacyl-ACPs and long chain saturated and unsaturated beta-hydroxyacyl-ACPs. This is 3-hydroxyacyl-[acyl-carrier-protein] dehydratase FabZ from Methylobacterium radiotolerans (strain ATCC 27329 / DSM 1819 / JCM 2831 / NBRC 15690 / NCIMB 10815 / 0-1).